Consider the following 321-residue polypeptide: Lipoyl synthase (321 aa).

[4Fe-4S] cluster is bound by residues cysteine 68, cysteine 73, cysteine 79, cysteine 94, cysteine 98, cysteine 101, and serine 308. A Radical SAM core domain is found at 80-297; that stretch reads FNHGTATFMI…KAEAIAMGFT (218 aa).

Belongs to the radical SAM superfamily. Lipoyl synthase family. Requires [4Fe-4S] cluster as cofactor.

The protein resides in the cytoplasm. It carries out the reaction [[Fe-S] cluster scaffold protein carrying a second [4Fe-4S](2+) cluster] + N(6)-octanoyl-L-lysyl-[protein] + 2 oxidized [2Fe-2S]-[ferredoxin] + 2 S-adenosyl-L-methionine + 4 H(+) = [[Fe-S] cluster scaffold protein] + N(6)-[(R)-dihydrolipoyl]-L-lysyl-[protein] + 4 Fe(3+) + 2 hydrogen sulfide + 2 5'-deoxyadenosine + 2 L-methionine + 2 reduced [2Fe-2S]-[ferredoxin]. The protein operates within protein modification; protein lipoylation via endogenous pathway; protein N(6)-(lipoyl)lysine from octanoyl-[acyl-carrier-protein]: step 2/2. Functionally, catalyzes the radical-mediated insertion of two sulfur atoms into the C-6 and C-8 positions of the octanoyl moiety bound to the lipoyl domains of lipoate-dependent enzymes, thereby converting the octanoylated domains into lipoylated derivatives. This is Lipoyl synthase from Pectobacterium carotovorum subsp. carotovorum (strain PC1).